Here is a 501-residue protein sequence, read N- to C-terminus: Cytochrome P450 76M5 (501 aa).

A helical transmembrane segment spans residues 5 to 25; sequence ELWVLAAALAVSLLYYLAALM. Cysteine 443 lines the heme pocket.

It belongs to the cytochrome P450 family. Heme is required as a cofactor.

Its subcellular location is the membrane. It catalyses the reaction ent-sandaracopimaradien-3beta-ol + reduced [NADPH--hemoprotein reductase] + O2 = oryzalexin E + oxidized [NADPH--hemoprotein reductase] + H2O + H(+). Functionally, enzyme of the diterpenoid metabolism involved in the biosynthesis of the oryzalexin class of phytoalexins. Hydroxylates ent-sandaracopimaradien. This Oryza sativa subsp. japonica (Rice) protein is Cytochrome P450 76M5.